The primary structure comprises 581 residues: Arginine--tRNA ligase (581 aa).

Residues 126 to 136 (PNLAKEMHVGH) carry the 'HIGH' region motif.

It belongs to the class-I aminoacyl-tRNA synthetase family. In terms of assembly, monomer.

It localises to the cytoplasm. It catalyses the reaction tRNA(Arg) + L-arginine + ATP = L-arginyl-tRNA(Arg) + AMP + diphosphate. This chain is Arginine--tRNA ligase, found in Shewanella oneidensis (strain ATCC 700550 / JCM 31522 / CIP 106686 / LMG 19005 / NCIMB 14063 / MR-1).